Here is a 264-residue protein sequence, read N- to C-terminus: Thymidylate synthase (264 aa).

Position 21 (Arg21) interacts with dUMP. Residue His51 coordinates (6R)-5,10-methylene-5,6,7,8-tetrahydrofolate. 126–127 (RR) lines the dUMP pocket. Cys146 acts as the Nucleophile in catalysis. DUMP is bound by residues 166–169 (RSAD), Asn177, and 207–209 (HIY). Asp169 provides a ligand contact to (6R)-5,10-methylene-5,6,7,8-tetrahydrofolate. Position 263 (Ser263) interacts with (6R)-5,10-methylene-5,6,7,8-tetrahydrofolate.

The protein belongs to the thymidylate synthase family. Bacterial-type ThyA subfamily. In terms of assembly, homodimer.

The protein resides in the cytoplasm. The enzyme catalyses dUMP + (6R)-5,10-methylene-5,6,7,8-tetrahydrofolate = 7,8-dihydrofolate + dTMP. Its pathway is pyrimidine metabolism; dTTP biosynthesis. Its function is as follows. Catalyzes the reductive methylation of 2'-deoxyuridine-5'-monophosphate (dUMP) to 2'-deoxythymidine-5'-monophosphate (dTMP) while utilizing 5,10-methylenetetrahydrofolate (mTHF) as the methyl donor and reductant in the reaction, yielding dihydrofolate (DHF) as a by-product. This enzymatic reaction provides an intracellular de novo source of dTMP, an essential precursor for DNA biosynthesis. This is Thymidylate synthase from Bacillus velezensis (strain DSM 23117 / BGSC 10A6 / LMG 26770 / FZB42) (Bacillus amyloliquefaciens subsp. plantarum).